We begin with the raw amino-acid sequence, 553 residues long: uncharacterized protein (553 aa).

Helical transmembrane passes span isoleucine 6–alanine 26 and serine 524–phenylalanine 544.

The protein to M.jannaschii MJ0795 and MJ1506.

Its subcellular location is the cell membrane. This is an uncharacterized protein from Methanocaldococcus jannaschii (strain ATCC 43067 / DSM 2661 / JAL-1 / JCM 10045 / NBRC 100440) (Methanococcus jannaschii).